The primary structure comprises 603 residues: Glutathione-regulated potassium-efflux system protein KefB (603 aa).

The next 13 membrane-spanning stretches (helical) occupy residues 4 to 24 (SDFLLAGVLFLFAAVAAVPLA), 29 to 49 (IGAVLGYLLAGIAIGPWGLGF), 55 to 75 (EILHFSELGVVFLMFIIGLEL), 87 to 107 (IFGVGAAQVLLSAALLAGLLM), 115 to 135 (AAVVGGIGLAMSSTAMALQLM), 152 to 172 (VLLFQDLAVIPALALVPLLAG), 177 to 197 (HFDWMKIGMKVLAFVGMLIGG), 207 to 227 (FIAASGVREVFTAATLLLVLG), 230 to 250 (LFMDALGLSMALGTFIAGVLL), 268 to 288 (GLLLGLFFISVGMSLNLGVLY), 291 to 311 (LLWVVISVVVLVAVKILVLYL), 324 to 344 (MQFAGVLSQGGEFAFVLFSTA), and 355 to 375 (MALLLVTVTVTLSMMTTPLLM). The RCK N-terminal domain occupies 402-521 (KPQVIVVGFG…AGVTQFSRET (120 aa)).

The protein belongs to the monovalent cation:proton antiporter 2 (CPA2) transporter (TC 2.A.37) family. KefB subfamily. In terms of assembly, interacts with the regulatory subunit KefG.

It is found in the cell inner membrane. Its function is as follows. Pore-forming subunit of a potassium efflux system that confers protection against electrophiles. Catalyzes K(+)/H(+) antiport. The sequence is that of Glutathione-regulated potassium-efflux system protein KefB from Shigella boydii serotype 4 (strain Sb227).